The chain runs to 357 residues: Geranylgeranyl pyrophosphate synthase, chloroplastic (357 aa).

The transit peptide at 1–40 (MRSNLCHPLKNQLPISFFLSGTIRKPIFSCSRLSISAIIT) directs the protein to the chloroplast. K106, R109, and H138 together coordinate isopentenyl diphosphate. Mg(2+)-binding residues include D145 and D151. A dimethylallyl diphosphate-binding site is contributed by R156. R157 is a binding site for isopentenyl diphosphate. Residues K242, T243, Q280, K297, and K307 each coordinate dimethylallyl diphosphate.

It belongs to the FPP/GGPP synthase family. It depends on Mg(2+) as a cofactor.

The protein localises to the plastid. It localises to the chloroplast. It carries out the reaction isopentenyl diphosphate + dimethylallyl diphosphate = (2E)-geranyl diphosphate + diphosphate. It catalyses the reaction isopentenyl diphosphate + (2E)-geranyl diphosphate = (2E,6E)-farnesyl diphosphate + diphosphate. The enzyme catalyses isopentenyl diphosphate + (2E,6E)-farnesyl diphosphate = (2E,6E,10E)-geranylgeranyl diphosphate + diphosphate. Its pathway is isoprenoid biosynthesis; farnesyl diphosphate biosynthesis; farnesyl diphosphate from geranyl diphosphate and isopentenyl diphosphate: step 1/1. It functions in the pathway isoprenoid biosynthesis; geranyl diphosphate biosynthesis; geranyl diphosphate from dimethylallyl diphosphate and isopentenyl diphosphate: step 1/1. It participates in isoprenoid biosynthesis; geranylgeranyl diphosphate biosynthesis; geranylgeranyl diphosphate from farnesyl diphosphate and isopentenyl diphosphate: step 1/1. In terms of biological role, catalyzes the trans-addition of the three molecules of IPP onto DMAPP to form geranylgeranyl pyrophosphate. In Catharanthus roseus (Madagascar periwinkle), this protein is Geranylgeranyl pyrophosphate synthase, chloroplastic (GGPS1).